A 1251-amino-acid chain; its full sequence is ATP-dependent helicase/nuclease subunit A (1251 aa).

A UvrD-like helicase ATP-binding domain is found at 5-481 (TKWTDEQWEA…IILSRNFRSR (477 aa)). 26–33 (AAAGAGKT) contributes to the ATP binding site. In terms of domain architecture, UvrD-like helicase C-terminal spans 526-824 (TVGGEVEFHL…RIMSIHKSKG (299 aa)). Positions 544 to 565 (NFTFENEGEEGRQADEGEEDEE) are disordered.

It belongs to the helicase family. AddA subfamily. In terms of assembly, heterodimer of AddA and AddB/RexB. Mg(2+) is required as a cofactor.

It carries out the reaction Couples ATP hydrolysis with the unwinding of duplex DNA by translocating in the 3'-5' direction.. It catalyses the reaction ATP + H2O = ADP + phosphate + H(+). In terms of biological role, the heterodimer acts as both an ATP-dependent DNA helicase and an ATP-dependent, dual-direction single-stranded exonuclease. Recognizes the chi site generating a DNA molecule suitable for the initiation of homologous recombination. The AddA nuclease domain is required for chi fragment generation; this subunit has the helicase and 3' -&gt; 5' nuclease activities. The protein is ATP-dependent helicase/nuclease subunit A of Acetivibrio thermocellus (strain ATCC 27405 / DSM 1237 / JCM 9322 / NBRC 103400 / NCIMB 10682 / NRRL B-4536 / VPI 7372) (Clostridium thermocellum).